Consider the following 364-residue polypeptide: S-adenosylmethionine:tRNA ribosyltransferase-isomerase (364 aa).

It belongs to the QueA family. In terms of assembly, monomer.

The protein resides in the cytoplasm. The catalysed reaction is 7-aminomethyl-7-carbaguanosine(34) in tRNA + S-adenosyl-L-methionine = epoxyqueuosine(34) in tRNA + adenine + L-methionine + 2 H(+). It participates in tRNA modification; tRNA-queuosine biosynthesis. Functionally, transfers and isomerizes the ribose moiety from AdoMet to the 7-aminomethyl group of 7-deazaguanine (preQ1-tRNA) to give epoxyqueuosine (oQ-tRNA). This Lachnoclostridium phytofermentans (strain ATCC 700394 / DSM 18823 / ISDg) (Clostridium phytofermentans) protein is S-adenosylmethionine:tRNA ribosyltransferase-isomerase.